A 131-amino-acid chain; its full sequence is Ribonuclease VapC3 (131 aa).

In terms of domain architecture, PINc spans 4 to 121 (VVDASAIAAL…GKLLTLDRQL (118 aa)). Positions 6, 100, and 118 each coordinate Mg(2+).

Belongs to the PINc/VapC protein family. Homodimer. Forms a complex with putative antitoxin VapB3, possibly VapB(2)-VapC(2). Requires Mg(2+) as cofactor.

Inhibited by EDTA. Its function is as follows. Toxic component of a type II toxin-antitoxin (TA) system. Has ribonuclease activity. The chain is Ribonuclease VapC3 from Pyrobaculum aerophilum (strain ATCC 51768 / DSM 7523 / JCM 9630 / CIP 104966 / NBRC 100827 / IM2).